Consider the following 640-residue polypeptide: 1-deoxy-D-xylulose-5-phosphate synthase (640 aa).

Thiamine diphosphate-binding positions include His75 and 117–119 (GHA). Residue Asp146 participates in Mg(2+) binding. Residues 147-148 (AA), Asn175, and Glu370 contribute to the thiamine diphosphate site. A Mg(2+)-binding site is contributed by Asn175.

This sequence belongs to the transketolase family. DXPS subfamily. In terms of assembly, homodimer. Mg(2+) is required as a cofactor. Thiamine diphosphate serves as cofactor.

The catalysed reaction is D-glyceraldehyde 3-phosphate + pyruvate + H(+) = 1-deoxy-D-xylulose 5-phosphate + CO2. Its pathway is metabolic intermediate biosynthesis; 1-deoxy-D-xylulose 5-phosphate biosynthesis; 1-deoxy-D-xylulose 5-phosphate from D-glyceraldehyde 3-phosphate and pyruvate: step 1/1. Functionally, catalyzes the acyloin condensation reaction between C atoms 2 and 3 of pyruvate and glyceraldehyde 3-phosphate to yield 1-deoxy-D-xylulose-5-phosphate (DXP). The protein is 1-deoxy-D-xylulose-5-phosphate synthase of Chlamydia trachomatis serovar L2 (strain ATCC VR-902B / DSM 19102 / 434/Bu).